Consider the following 94-residue polypeptide: Small ribosomal subunit protein bS6 (94 aa).

This sequence belongs to the bacterial ribosomal protein bS6 family.

Its function is as follows. Binds together with bS18 to 16S ribosomal RNA. The sequence is that of Small ribosomal subunit protein bS6 from Clostridium botulinum (strain 657 / Type Ba4).